Reading from the N-terminus, the 120-residue chain is uncharacterized protein (120 aa).

This sequence to B.subtilis XkdH.

This is an uncharacterized protein from Bacillus subtilis (strain 168).